Reading from the N-terminus, the 622-residue chain is Dehydrogenase xptC (622 aa).

Positions 1 to 18 (MAKLSVILLFRSLLLCGA) are cleaved as a signal peptide. Residues 47 to 48 (VS), 68 to 69 (EA), and 123 to 126 (NAMI) each bind FAD. N-linked (GlcNAc...) asparagine glycans are attached at residues asparagine 160, asparagine 173, asparagine 357, asparagine 364, and asparagine 480. 598–599 (PM) lines the FAD pocket.

It belongs to the GMC oxidoreductase family. As to quaternary structure, homodimer. Requires FAD as cofactor.

The protein operates within secondary metabolite biosynthesis. Its function is as follows. Dehydrogenase involved in the conversion of monodictyphenone to the prenyl xanthones such as emericellin, shamixanthone and epishamixanthone. Monodictyphenone is first converted to variecoxanthone A via a paeciloxanthone intermediate by the consecutive actions of the FAD-dependent monooxygenase mdpD and the xanthone prenyltransferase xptB. XptB catalyzes regular O-prenylation at the hydroxy group of C-7 of the xanthone ring. Variecoxanthone A is further prenylated to emericellin by xptA before being reduced to shamixanthone and epishamixanthone by the dehydrogenase xptC. The sequence is that of Dehydrogenase xptC from Emericella nidulans (strain FGSC A4 / ATCC 38163 / CBS 112.46 / NRRL 194 / M139) (Aspergillus nidulans).